The primary structure comprises 200 residues: Large ribosomal subunit protein uL4 (200 aa).

The disordered stretch occupies residues Gly38–Arg68. Basic residues predominate over residues Gly54–Gly65.

This sequence belongs to the universal ribosomal protein uL4 family. In terms of assembly, part of the 50S ribosomal subunit.

In terms of biological role, one of the primary rRNA binding proteins, this protein initially binds near the 5'-end of the 23S rRNA. It is important during the early stages of 50S assembly. It makes multiple contacts with different domains of the 23S rRNA in the assembled 50S subunit and ribosome. Functionally, forms part of the polypeptide exit tunnel. In Pseudomonas syringae pv. tomato (strain ATCC BAA-871 / DC3000), this protein is Large ribosomal subunit protein uL4.